The primary structure comprises 156 residues: Regulatory protein RecX (156 aa).

Belongs to the RecX family.

Its subcellular location is the cytoplasm. In terms of biological role, modulates RecA activity. This chain is Regulatory protein RecX, found in Pseudomonas putida (strain ATCC 47054 / DSM 6125 / CFBP 8728 / NCIMB 11950 / KT2440).